Consider the following 170-residue polypeptide: Probable calcium-binding protein CML27 (170 aa).

A2 is subject to N-acetylalanine. 4 EF-hand domains span residues A19–S54, Y55–R85, S88–S123, and V136–L159. 19 residues coordinate Ca(2+): D32, N34, D36, K38, E43, D68, D70, D72, Y74, E79, D101, D103, N105, E112, D137, D139, D141, N143, and E148.

Functionally, potential calcium sensor. The chain is Probable calcium-binding protein CML27 (CML27) from Arabidopsis thaliana (Mouse-ear cress).